A 144-amino-acid chain; its full sequence is Giant hemoglobins B chain (144 aa).

Positions 3–144 constitute a Globin domain; sequence VCGPLQRLKV…LNVITNGIQG (142 aa). His-96 contacts heme b.

This sequence belongs to the globin family. As to quaternary structure, part of giant hemoglobin C1, V1 and V2. This worm has three different extracellular Hbs: two dissolved in the vascular blood, V1 (CA. 3,500 kDa) and V2 (CA. 400 kDa), and one in the coelomic fluid, C1 (CA. 400 kDa). V1 consists of four heme-containing, globin chains (B-E) and four linker chains (L1-L4). V2 consists of six globin chains (A-F) and C1 consists of five globin chains (A-E).

Its subcellular location is the secreted. It localises to the extracellular space. The sequence is that of Giant hemoglobins B chain from Riftia pachyptila (Vent tube worm).